Reading from the N-terminus, the 482-residue chain is tRNA sulfurtransferase (482 aa).

A THUMP domain is found at 61–165 (DQILAILMQT…YDHLHQVLHR (105 aa)). ATP is bound by residues 183–184 (LI), Lys-265, Gly-287, and Gln-296. Cys-344 and Cys-456 form a disulfide bridge. The 79-residue stretch at 404 to 482 (IGDGAIVLDI…GYGNIKVYRP (79 aa)) folds into the Rhodanese domain. The active-site Cysteine persulfide intermediate is the Cys-456.

Belongs to the ThiI family.

The protein resides in the cytoplasm. The enzyme catalyses [ThiI sulfur-carrier protein]-S-sulfanyl-L-cysteine + a uridine in tRNA + 2 reduced [2Fe-2S]-[ferredoxin] + ATP + H(+) = [ThiI sulfur-carrier protein]-L-cysteine + a 4-thiouridine in tRNA + 2 oxidized [2Fe-2S]-[ferredoxin] + AMP + diphosphate. The catalysed reaction is [ThiS sulfur-carrier protein]-C-terminal Gly-Gly-AMP + S-sulfanyl-L-cysteinyl-[cysteine desulfurase] + AH2 = [ThiS sulfur-carrier protein]-C-terminal-Gly-aminoethanethioate + L-cysteinyl-[cysteine desulfurase] + A + AMP + 2 H(+). Its pathway is cofactor biosynthesis; thiamine diphosphate biosynthesis. Catalyzes the ATP-dependent transfer of a sulfur to tRNA to produce 4-thiouridine in position 8 of tRNAs, which functions as a near-UV photosensor. Also catalyzes the transfer of sulfur to the sulfur carrier protein ThiS, forming ThiS-thiocarboxylate. This is a step in the synthesis of thiazole, in the thiamine biosynthesis pathway. The sulfur is donated as persulfide by IscS. This is tRNA sulfurtransferase from Photobacterium profundum (strain SS9).